We begin with the raw amino-acid sequence, 429 residues long: Enolase (429 aa).

A (2R)-2-phosphoglycerate-binding site is contributed by glutamine 163. Catalysis depends on glutamate 205, which acts as the Proton donor. The Mg(2+) site is built by aspartate 242, glutamate 285, and aspartate 312. Positions 337, 366, 367, and 388 each coordinate (2R)-2-phosphoglycerate. Lysine 337 acts as the Proton acceptor in catalysis.

Belongs to the enolase family. Mg(2+) serves as cofactor.

It localises to the cytoplasm. The protein resides in the secreted. The protein localises to the cell surface. It carries out the reaction (2R)-2-phosphoglycerate = phosphoenolpyruvate + H2O. Its pathway is carbohydrate degradation; glycolysis; pyruvate from D-glyceraldehyde 3-phosphate: step 4/5. In terms of biological role, catalyzes the reversible conversion of 2-phosphoglycerate (2-PG) into phosphoenolpyruvate (PEP). It is essential for the degradation of carbohydrates via glycolysis. The protein is Enolase of Aromatoleum aromaticum (strain DSM 19018 / LMG 30748 / EbN1) (Azoarcus sp. (strain EbN1)).